The primary structure comprises 700 residues: Elongation factor G (700 aa).

In terms of domain architecture, tr-type G spans 10–286 (NKVRNIGIMA…AVIDYLPNPL (277 aa)). Residues 19 to 26 (AHIDAGKT), 83 to 87 (DTPGH), and 137 to 140 (NKMD) contribute to the GTP site.

It belongs to the TRAFAC class translation factor GTPase superfamily. Classic translation factor GTPase family. EF-G/EF-2 subfamily.

Its subcellular location is the cytoplasm. In terms of biological role, catalyzes the GTP-dependent ribosomal translocation step during translation elongation. During this step, the ribosome changes from the pre-translocational (PRE) to the post-translocational (POST) state as the newly formed A-site-bound peptidyl-tRNA and P-site-bound deacylated tRNA move to the P and E sites, respectively. Catalyzes the coordinated movement of the two tRNA molecules, the mRNA and conformational changes in the ribosome. This chain is Elongation factor G, found in Rhodococcus erythropolis (strain PR4 / NBRC 100887).